Consider the following 370-residue polypeptide: Dihydroorotate dehydrogenase (quinone) (370 aa).

FMN contacts are provided by residues 67–71 and threonine 91; that span reads AGFDK. Lysine 71 lines the substrate pocket. Residue 116–120 coordinates substrate; the sequence is NRMGF. FMN is bound by residues asparagine 146 and asparagine 179. Asparagine 179 contributes to the substrate binding site. The active-site Nucleophile is the serine 182. Asparagine 184 contributes to the substrate binding site. 2 residues coordinate FMN: lysine 222 and threonine 250. 251 to 252 is a substrate binding site; it reads NT. Residues glycine 276, glycine 305, and 326-327 contribute to the FMN site; that span reads YS.

This sequence belongs to the dihydroorotate dehydrogenase family. Type 2 subfamily. Monomer. Requires FMN as cofactor.

It is found in the cell membrane. It carries out the reaction (S)-dihydroorotate + a quinone = orotate + a quinol. It functions in the pathway pyrimidine metabolism; UMP biosynthesis via de novo pathway; orotate from (S)-dihydroorotate (quinone route): step 1/1. In terms of biological role, catalyzes the conversion of dihydroorotate to orotate with quinone as electron acceptor. This Streptomyces griseus subsp. griseus (strain JCM 4626 / CBS 651.72 / NBRC 13350 / KCC S-0626 / ISP 5235) protein is Dihydroorotate dehydrogenase (quinone).